The following is a 284-amino-acid chain: Diaminopimelate epimerase (284 aa).

N21, Q54, and N74 together coordinate substrate. The Proton donor role is filled by C83. Substrate contacts are provided by residues G84–N85, N167, N200, and E218–R219. C227 (proton acceptor) is an active-site residue. G228 to S229 serves as a coordination point for substrate.

The protein belongs to the diaminopimelate epimerase family. As to quaternary structure, homodimer.

Its subcellular location is the cytoplasm. It catalyses the reaction (2S,6S)-2,6-diaminopimelate = meso-2,6-diaminopimelate. It functions in the pathway amino-acid biosynthesis; L-lysine biosynthesis via DAP pathway; DL-2,6-diaminopimelate from LL-2,6-diaminopimelate: step 1/1. In terms of biological role, catalyzes the stereoinversion of LL-2,6-diaminopimelate (L,L-DAP) to meso-diaminopimelate (meso-DAP), a precursor of L-lysine and an essential component of the bacterial peptidoglycan. This is Diaminopimelate epimerase from Buchnera aphidicola subsp. Acyrthosiphon pisum (strain 5A).